A 278-amino-acid polypeptide reads, in one-letter code: MALKTFKPVTPSLRQLVLVDRRELYKGKPVKALTEGKSSSGGRNNLGRITVRFRGGGHKRVLRNVDFKRRENLNVPATVERIEYDPNRTAFIALITFPDGKQSYILAPQRLSPGDKVVAGESVDVKPGNAGPIGSMPVGTIVHNVELKIGKGGAIARSAGNYAQIVGRDQGYVTLRLNSGEQRLVHGQCFASVGAVSNPDHMNISLGKAGRNRWLGKRPHNRGVAMNPVDHPHGGGEGRTSGGRNPVTPWGVPTKGKKTRSNKRTDTFILSSRHNRKK.

Residues 212-221 (NRWLGKRPHN) are compositionally biased toward basic residues. Residues 212–278 (NRWLGKRPHN…ILSSRHNRKK (67 aa)) are disordered.

Belongs to the universal ribosomal protein uL2 family. As to quaternary structure, part of the 50S ribosomal subunit. Forms a bridge to the 30S subunit in the 70S ribosome.

One of the primary rRNA binding proteins. Required for association of the 30S and 50S subunits to form the 70S ribosome, for tRNA binding and peptide bond formation. It has been suggested to have peptidyltransferase activity; this is somewhat controversial. Makes several contacts with the 16S rRNA in the 70S ribosome. The chain is Large ribosomal subunit protein uL2 from Methylorubrum populi (strain ATCC BAA-705 / NCIMB 13946 / BJ001) (Methylobacterium populi).